The following is a 356-amino-acid chain: tRNA-specific 2-thiouridylase MnmA 2 (356 aa).

Residues 8-15 (GMSGGVDS) and Met34 contribute to the ATP site. Cys103 functions as the Nucleophile in the catalytic mechanism. A disulfide bond links Cys103 and Cys199. Gly127 is an ATP binding site. The interaction with tRNA stretch occupies residues 149 to 151 (KDQ). The active-site Cysteine persulfide intermediate is Cys199. Positions 305 to 306 (RY) are interaction with tRNA.

This sequence belongs to the MnmA/TRMU family.

It localises to the cytoplasm. The catalysed reaction is S-sulfanyl-L-cysteinyl-[protein] + uridine(34) in tRNA + AH2 + ATP = 2-thiouridine(34) in tRNA + L-cysteinyl-[protein] + A + AMP + diphosphate + H(+). Catalyzes the 2-thiolation of uridine at the wobble position (U34) of tRNA, leading to the formation of s(2)U34. This is tRNA-specific 2-thiouridylase MnmA 2 from Clostridium botulinum (strain Okra / Type B1).